Here is a 377-residue protein sequence, read N- to C-terminus: DNA replication and repair protein RecF (377 aa).

An ATP-binding site is contributed by 30 to 37 (GLNGSGKT).

This sequence belongs to the RecF family.

It is found in the cytoplasm. Functionally, the RecF protein is involved in DNA metabolism; it is required for DNA replication and normal SOS inducibility. RecF binds preferentially to single-stranded, linear DNA. It also seems to bind ATP. This Cytophaga hutchinsonii (strain ATCC 33406 / DSM 1761 / CIP 103989 / NBRC 15051 / NCIMB 9469 / D465) protein is DNA replication and repair protein RecF.